Consider the following 738-residue polypeptide: MARTPWLPNAYPPARRSDHVDIYKSALRGDVRVQDPYQWLEEYTDETDKWTTAQEVFTRTYLDKNPDLPRLEKAFQACNDYPKSYAPYLHDDNRWYWYYNSGLEPQTALYRSKDSSLPDLSTADGSGGDLFFDPNALSNDGTAALSTYAFSDCGKYFAYGISFSGSDFVTIYVRLTDSPLTKDVDAKNDKGRLPEEIKFVKFSSIGWTPDSKGFFYQRYPDTSTVTQENGPIATEGDLDAMVYYHRLGTPQSEDTLIYQDKEHRDWMFSIDVTDDGNYLLLYILKDSSRQNLLWIAAFDPANLGPNIKWQKVFDEYHSEYEIITNKGSLFYVRTNESAPQYRVITVDIAKGNEINELIPETDAYLSSITSVNKGYFALVYKRNVKDEVYVYSHAGNQLARLAEDFVGAAHVSGREKHSSFFVELNGFTSPGTIGRYKFTDPEEQRWSIYRTTKLNGLNTEDFEASQVWYESKDGTSIPMFIVRHKSTKFDGTAPVIQYGYGGFSISIDPFFSATILTFLQKYGVVFALPNIRGGGEFGEDWHLAGCREKKGNCFDDFIAATQYLVKNKYAAPDKVTINGGSNGGLLVSACVNRAPEGTFGCAVADVGVHDLLKFHKFTIGKAWTSDYGNPDDPNDFDFIFPISPLQNIPKDKVFPPMLLLTADHDDRVVPMHSFKLAAELQYSLPHNPNPLLIRIDKKAGHGAGKSTQQKIKESADKWGFVAQSLGLVWKDSTEQPNL.

Catalysis depends on charge relay system residues Ser581, Asp665, and His701.

The protein belongs to the peptidase S9A family. In terms of assembly, monomer.

It catalyses the reaction Hydrolysis of Pro-|-Xaa &gt;&gt; Ala-|-Xaa in oligopeptides.. Functionally, housekeeping prolyl oligopeptidase (POP) that behaves like a conventional POP by cleaving peptide bonds on the C-terminal side of prolyl residues within peptides that are up to approximately 30 amino acids long. The polypeptide is Prolyl oligopeptidase A (Galerina marginata (strain CBS 339.88)).